The chain runs to 189 residues: Protein GrpE (189 aa).

A compositionally biased stretch (polar residues) spans 1–13 (MSENKQPEQNQDL). Residues 1–35 (MSENKQPEQNQDLTGEPSPEELEAAQAADEFDAMN) are disordered.

It belongs to the GrpE family. In terms of assembly, homodimer.

It localises to the cytoplasm. Functionally, participates actively in the response to hyperosmotic and heat shock by preventing the aggregation of stress-denatured proteins, in association with DnaK and GrpE. It is the nucleotide exchange factor for DnaK and may function as a thermosensor. Unfolded proteins bind initially to DnaJ; upon interaction with the DnaJ-bound protein, DnaK hydrolyzes its bound ATP, resulting in the formation of a stable complex. GrpE releases ADP from DnaK; ATP binding to DnaK triggers the release of the substrate protein, thus completing the reaction cycle. Several rounds of ATP-dependent interactions between DnaJ, DnaK and GrpE are required for fully efficient folding. This Polaromonas naphthalenivorans (strain CJ2) protein is Protein GrpE.